A 489-amino-acid polypeptide reads, in one-letter code: Mitochondrial distribution and morphology protein 12 (489 aa).

One can recognise an SMP-LTD domain in the interval 1–489 (MSIDLNWEAA…VFPSFWTFLV (489 aa)). Residues 72–82 (ESDSEDEDEGH) show a composition bias toward acidic residues. Disordered regions lie at residues 72 to 97 (ESDS…AAAD), 201 to 313 (WPDA…MRER), and 394 to 432 (DINH…QPRR). Over residues 231–249 (LDTGSPSRPSTANTNPTQL) the composition is skewed to polar residues. Low complexity-rich tracts occupy residues 250-265 (SHGQ…NTSN) and 398-424 (QQRQ…NNPE).

Belongs to the MDM12 family. As to quaternary structure, component of the ER-mitochondria encounter structure (ERMES) or MDM complex, composed of MMM1, MDM10, mdm12 and MDM34. An MMM1 homodimer associates with one molecule of mdm12 on each side in a pairwise head-to-tail manner, and the SMP-LTD domains of MMM1 and mdm12 generate a continuous hydrophobic tunnel for phospholipid trafficking.

The protein resides in the mitochondrion outer membrane. The protein localises to the endoplasmic reticulum membrane. Its function is as follows. Component of the ERMES/MDM complex, which serves as a molecular tether to connect the endoplasmic reticulum (ER) and mitochondria. Components of this complex are involved in the control of mitochondrial shape and protein biogenesis, and function in nonvesicular lipid trafficking between the ER and mitochondria. mdm12 is required for the interaction of the ER-resident membrane protein MMM1 and the outer mitochondrial membrane-resident beta-barrel protein MDM10. The mdm12-MMM1 subcomplex functions in the major beta-barrel assembly pathway that is responsible for biogenesis of all mitochondrial outer membrane beta-barrel proteins, and acts in a late step after the SAM complex. The MDM10-mdm12-MMM1 subcomplex further acts in the TOM40-specific pathway after the action of the mdm12-MMM1 complex. Essential for establishing and maintaining the structure of mitochondria and maintenance of mtDNA nucleoids. The protein is Mitochondrial distribution and morphology protein 12 of Talaromyces marneffei (strain ATCC 18224 / CBS 334.59 / QM 7333) (Penicillium marneffei).